We begin with the raw amino-acid sequence, 580 residues long: Arginine--tRNA ligase (580 aa).

Positions A131–H141 match the 'HIGH' region motif.

It belongs to the class-I aminoacyl-tRNA synthetase family. In terms of assembly, monomer.

The protein localises to the cytoplasm. The enzyme catalyses tRNA(Arg) + L-arginine + ATP = L-arginyl-tRNA(Arg) + AMP + diphosphate. The protein is Arginine--tRNA ligase of Roseobacter denitrificans (strain ATCC 33942 / OCh 114) (Erythrobacter sp. (strain OCh 114)).